A 436-amino-acid polypeptide reads, in one-letter code: Proteasome-activating nucleotidase (436 aa).

Residues 15 to 97 (EELCRLYRSL…LKSESEQLRS (83 aa)) are a coiled coil. ATP contacts are provided by residues 222–227 (GTGKTL) and H361. Positions 434 to 436 (MFA) are docks into pockets in the proteasome alpha-ring to cause gate opening.

This sequence belongs to the AAA ATPase family. In terms of assembly, homohexamer. The hexameric complex has a two-ring architecture resembling a top hat that caps the 20S proteasome core at one or both ends. Upon ATP-binding, the C-terminus of PAN interacts with the alpha-rings of the proteasome core by binding to the intersubunit pockets.

The protein resides in the cytoplasm. In terms of biological role, ATPase which is responsible for recognizing, binding, unfolding and translocation of substrate proteins into the archaeal 20S proteasome core particle. Is essential for opening the gate of the 20S proteasome via an interaction with its C-terminus, thereby allowing substrate entry and access to the site of proteolysis. Thus, the C-termini of the proteasomal ATPase function like a 'key in a lock' to induce gate opening and therefore regulate proteolysis. Unfolding activity requires energy from ATP hydrolysis, whereas ATP binding alone promotes ATPase-20S proteasome association which triggers gate opening, and supports translocation of unfolded substrates. This Methanoregula boonei (strain DSM 21154 / JCM 14090 / 6A8) protein is Proteasome-activating nucleotidase.